A 201-amino-acid polypeptide reads, in one-letter code: Ribonuclease HII (201 aa).

The region spanning 12 to 201 is the RNase H type-2 domain; sequence GIVCGIDEVG…FAPVAQYMLF (190 aa). Residues Asp18, Glu19, and Asp113 each coordinate a divalent metal cation.

The protein belongs to the RNase HII family. Mn(2+) serves as cofactor. It depends on Mg(2+) as a cofactor.

The protein localises to the cytoplasm. It catalyses the reaction Endonucleolytic cleavage to 5'-phosphomonoester.. In terms of biological role, endonuclease that specifically degrades the RNA of RNA-DNA hybrids. This chain is Ribonuclease HII (rnhB), found in Paramagnetospirillum magneticum (strain ATCC 700264 / AMB-1) (Magnetospirillum magneticum).